The following is a 442-amino-acid chain: Type 3 secretion system ATPase (442 aa).

173 to 178 (GVGKST) serves as a coordination point for ATP.

Belongs to the ATPase alpha/beta chains family. T3SS ATPase subfamily. The core secretion machinery of the T3SS is composed of approximately 20 different proteins, including cytoplasmic components, a base, an export apparatus and a needle. This subunit is part of the cytosolic complex. Forms homohexamers.

The protein localises to the cytoplasm. It carries out the reaction ATP + H2O + cellular proteinSide 1 = ADP + phosphate + cellular proteinSide 2.. Functionally, ATPase component of the type III secretion system (T3SS), also called injectisome, which is used to inject bacterial effector proteins into eukaryotic host cells. Acts as a molecular motor to provide the energy that is required for the export of proteins. Required for type III secretion apparatus (T3SA) formation, proper protein secretion, host cell invasion and virulence. May play a critical role in T3SS substrate recognition, disassembly of the effector/chaperone complex and unfolding of the effector in an ATP-dependent manner prior to secretion. The polypeptide is Type 3 secretion system ATPase (Xanthomonas euvesicatoria).